The sequence spans 71 residues: Pro-glucagon (71 aa).

This sequence belongs to the glucagon family.

Its subcellular location is the secreted. Its function is as follows. Plays a key role in glucose metabolism and homeostasis. Regulates blood glucose by increasing gluconeogenesis and decreasing glycolysis. The polypeptide is Pro-glucagon (gcg) (Piaractus mesopotamicus (Small-scaled pacu)).